A 655-amino-acid polypeptide reads, in one-letter code: Very long-chain specific acyl-CoA dehydrogenase, mitochondrial (655 aa).

The transit peptide at 1-40 directs the protein to the mitochondrion; the sequence is MQAARMAASLGRQLLRLGGGSSRLTALLGQPRPGPARRPY. The disordered stretch occupies residues 23–42; sequence RLTALLGQPRPGPARRPYAG. The interval 41-482 is catalytic; that stretch reads AGGAAQLALD…ALQGCMDKGK (442 aa). Lysine 51 bears the N6-acetyllysine mark. The residue at position 71 (lysine 71) is an N6-acetyllysine; alternate. Lysine 71 bears the N6-succinyllysine; alternate mark. N6-succinyllysine is present on lysine 195. 214-223 serves as a coordination point for FAD; it reads FCLTEPSSGS. The residue at position 237 (cysteine 237) is an S-nitrosocysteine. Lysine 239 is modified (N6-acetyllysine; alternate). Lysine 239 carries the post-translational modification N6-succinyllysine; alternate. 249–251 is a binding site for FAD; it reads WIS. Residues lysine 276 and lysine 278 each carry the N6-acetyllysine; alternate modification. 2 positions are modified to N6-succinyllysine; alternate: lysine 276 and lysine 278. Lysine 298 is subject to N6-acetyllysine. Position 331 is an N6-acetyllysine; alternate (lysine 331). Lysine 331 carries the N6-succinyllysine; alternate modification. Residue lysine 372 is modified to N6-succinyllysine. 461–463 is a binding site for substrate; it reads FEG. The active-site Proton acceptor is the glutamate 462. An FAD-binding site is contributed by 464-466; it reads TND. An N6-acetyllysine; alternate modification is found at lysine 482. Lysine 482 is modified (N6-succinyllysine; alternate). Positions 483-516 are membrane-anchoring; it reads ELSGLGSALKNPFGNAGLLLGEAGKQLRRRAGLG. Serine 517 and serine 522 each carry phosphoserine. Lysine 550 carries the N6-acetyllysine modification. The residue at position 556 (lysine 556) is an N6-acetyllysine; alternate. N6-succinyllysine; alternate is present on lysine 556. Glutamine 562 lines the FAD pocket. Lysine 639 bears the N6-succinyllysine mark.

Belongs to the acyl-CoA dehydrogenase family. In terms of assembly, homodimer. Homodimerizes after import into the mitochondrion. FAD serves as cofactor. Post-translationally, S-nitrosylation at Cys-237 in liver improves catalytic efficiency. As to expression, predominantly expressed in heart and skeletal muscle (at protein level). Also detected in kidney and liver (at protein level).

The protein localises to the mitochondrion inner membrane. The catalysed reaction is a very-long-chain 2,3-saturated fatty acyl-CoA + oxidized [electron-transfer flavoprotein] + H(+) = a very-long-chain (2E)-enoyl-CoA + reduced [electron-transfer flavoprotein]. The enzyme catalyses decanoyl-CoA + oxidized [electron-transfer flavoprotein] + H(+) = (2E)-decenoyl-CoA + reduced [electron-transfer flavoprotein]. It carries out the reaction dodecanoyl-CoA + oxidized [electron-transfer flavoprotein] + H(+) = (2E)-dodecenoyl-CoA + reduced [electron-transfer flavoprotein]. It catalyses the reaction tetradecanoyl-CoA + oxidized [electron-transfer flavoprotein] + H(+) = (2E)-tetradecenoyl-CoA + reduced [electron-transfer flavoprotein]. The catalysed reaction is oxidized [electron-transfer flavoprotein] + hexadecanoyl-CoA + H(+) = (2E)-hexadecenoyl-CoA + reduced [electron-transfer flavoprotein]. The enzyme catalyses octadecanoyl-CoA + oxidized [electron-transfer flavoprotein] + H(+) = (2E)-octadecenoyl-CoA + reduced [electron-transfer flavoprotein]. It carries out the reaction eicosanoyl-CoA + oxidized [electron-transfer flavoprotein] + H(+) = (2E)-eicosenoyl-CoA + reduced [electron-transfer flavoprotein]. It catalyses the reaction docosanoyl-CoA + oxidized [electron-transfer flavoprotein] + H(+) = (2E)-docosenoyl-CoA + reduced [electron-transfer flavoprotein]. The catalysed reaction is tetracosanoyl-CoA + oxidized [electron-transfer flavoprotein] + H(+) = (2E)-tetracosenoyl-CoA + reduced [electron-transfer flavoprotein]. The enzyme catalyses (9Z)-hexadecenoyl-CoA + oxidized [electron-transfer flavoprotein] + H(+) = (2E,9Z)-hexadecadienoyl-CoA + reduced [electron-transfer flavoprotein]. It carries out the reaction oxidized [electron-transfer flavoprotein] + (9Z)-octadecenoyl-CoA + H(+) = (2E,9Z)-octadecadienoyl-CoA + reduced [electron-transfer flavoprotein]. It participates in lipid metabolism; mitochondrial fatty acid beta-oxidation. Its function is as follows. Very long-chain specific acyl-CoA dehydrogenase is one of the acyl-CoA dehydrogenases that catalyze the first step of mitochondrial fatty acid beta-oxidation, an aerobic process breaking down fatty acids into acetyl-CoA and allowing the production of energy from fats. The first step of fatty acid beta-oxidation consists in the removal of one hydrogen from C-2 and C-3 of the straight-chain fatty acyl-CoA thioester, resulting in the formation of trans-2-enoyl-CoA. Among the different mitochondrial acyl-CoA dehydrogenases, very long-chain specific acyl-CoA dehydrogenase acts specifically on acyl-CoAs with saturated 12 to 24 carbons long primary chains. The sequence is that of Very long-chain specific acyl-CoA dehydrogenase, mitochondrial from Homo sapiens (Human).